The sequence spans 149 residues: Small ribosomal subunit protein uS13 (149 aa).

The protein belongs to the universal ribosomal protein uS13 family. Part of the 30S ribosomal subunit. Forms a loose heterodimer with protein S19. Forms two bridges to the 50S subunit in the 70S ribosome.

In terms of biological role, located at the top of the head of the 30S subunit, it contacts several helices of the 16S rRNA. In the 70S ribosome it contacts the 23S rRNA (bridge B1a) and protein L5 of the 50S subunit (bridge B1b), connecting the 2 subunits; these bridges are implicated in subunit movement. This Methanococcus maripaludis (strain DSM 14266 / JCM 13030 / NBRC 101832 / S2 / LL) protein is Small ribosomal subunit protein uS13.